A 343-amino-acid chain; its full sequence is Arginine-hydroxylase NDUFAF5, mitochondrial (343 aa).

A mitochondrion-targeting transit peptide spans 1-29 (MLRRVVLSRLYARLGGPAVSAGRGGRRGV). The interval 18–40 (AVSAGRGGRRGVASSVPPSGSTS) is disordered.

Belongs to the methyltransferase superfamily. As to quaternary structure, interacts with NDUFAF8, leading to stabilize NDUFAF5. Interacts with NDUFS7. Interacts with PYURF (via TRM112 domain); the interaction is direct and stabilizes NDUFAF5 protein.

It is found in the mitochondrion inner membrane. In terms of biological role, arginine hydroxylase that mediates hydroxylation of 'Arg-111' of NDUFS7 and is involved in the assembly of mitochondrial NADH:ubiquinone oxidoreductase complex (complex I, MT-ND1) at early stages. May also have methyltransferase activity. The protein is Arginine-hydroxylase NDUFAF5, mitochondrial of Rattus norvegicus (Rat).